Reading from the N-terminus, the 326-residue chain is tRNA U34 carboxymethyltransferase (326 aa).

Carboxy-S-adenosyl-L-methionine-binding residues include Lys-91, Trp-105, Lys-110, Gly-130, Met-196, Tyr-200, and Arg-315.

This sequence belongs to the class I-like SAM-binding methyltransferase superfamily. CmoB family. In terms of assembly, homotetramer.

The enzyme catalyses carboxy-S-adenosyl-L-methionine + 5-hydroxyuridine(34) in tRNA = 5-carboxymethoxyuridine(34) in tRNA + S-adenosyl-L-homocysteine + H(+). Functionally, catalyzes carboxymethyl transfer from carboxy-S-adenosyl-L-methionine (Cx-SAM) to 5-hydroxyuridine (ho5U) to form 5-carboxymethoxyuridine (cmo5U) at position 34 in tRNAs. The sequence is that of tRNA U34 carboxymethyltransferase from Tolumonas auensis (strain DSM 9187 / NBRC 110442 / TA 4).